Consider the following 672-residue polypeptide: Poly-beta-1,6-N-acetyl-D-glucosamine N-deacetylase (672 aa).

A signal peptide spans Met1–Ala20. The N-palmitoyl cysteine moiety is linked to residue Cys21. A lipid anchor (S-diacylglycerol cysteine) is attached at Cys21. The 243-residue stretch at Lys107–Ser349 folds into the NodB homology domain.

It belongs to the polysaccharide deacetylase family.

Its subcellular location is the cell outer membrane. Catalyzes the N-deacetylation of poly-beta-1,6-N-acetyl-D-glucosamine (PGA), a biofilm adhesin polysaccharide. N-deacetylation promotes PGA export through the PgaA porin. In Escherichia coli (strain K12), this protein is Poly-beta-1,6-N-acetyl-D-glucosamine N-deacetylase (pgaB).